The chain runs to 76 residues: UPF0291 protein BC_1827 (76 aa).

This sequence belongs to the UPF0291 family.

It localises to the cytoplasm. This chain is UPF0291 protein BC_1827, found in Bacillus cereus (strain ATCC 14579 / DSM 31 / CCUG 7414 / JCM 2152 / NBRC 15305 / NCIMB 9373 / NCTC 2599 / NRRL B-3711).